The primary structure comprises 348 residues: Anthranilate phosphoribosyltransferase (348 aa).

5-phospho-alpha-D-ribose 1-diphosphate contacts are provided by residues glycine 84, 87 to 88, threonine 92, 94 to 97, 112 to 120, and serine 124; these read GD, NITT, and KHGNRSVSS. An anthranilate-binding site is contributed by glycine 84. Threonine 96 is a binding site for Mg(2+). Asparagine 115 lines the anthranilate pocket. Arginine 170 provides a ligand contact to anthranilate. Residues aspartate 228 and glutamate 229 each coordinate Mg(2+).

This sequence belongs to the anthranilate phosphoribosyltransferase family. In terms of assembly, homodimer. Mg(2+) is required as a cofactor.

The catalysed reaction is N-(5-phospho-beta-D-ribosyl)anthranilate + diphosphate = 5-phospho-alpha-D-ribose 1-diphosphate + anthranilate. The protein operates within amino-acid biosynthesis; L-tryptophan biosynthesis; L-tryptophan from chorismate: step 2/5. In terms of biological role, catalyzes the transfer of the phosphoribosyl group of 5-phosphorylribose-1-pyrophosphate (PRPP) to anthranilate to yield N-(5'-phosphoribosyl)-anthranilate (PRA). The sequence is that of Anthranilate phosphoribosyltransferase from Corynebacterium glutamicum (strain R).